The following is a 228-amino-acid chain: Cytidylate kinase (228 aa).

17–25 (GPTASGKGT) serves as a coordination point for ATP.

The protein belongs to the cytidylate kinase family. Type 1 subfamily.

Its subcellular location is the cytoplasm. It carries out the reaction CMP + ATP = CDP + ADP. The enzyme catalyses dCMP + ATP = dCDP + ADP. In Paraburkholderia phymatum (strain DSM 17167 / CIP 108236 / LMG 21445 / STM815) (Burkholderia phymatum), this protein is Cytidylate kinase.